The primary structure comprises 226 residues: Phosphoglycolate phosphatase (226 aa).

Asp9 serves as the catalytic Nucleophile. Mg(2+) contacts are provided by Asp9 and Asp11. Lys150 is a binding site for substrate. The Mg(2+) site is built by Asp173 and Asp177.

This sequence belongs to the archaeal SPP-like hydrolase family. It depends on Mg(2+) as a cofactor.

The enzyme catalyses 2-phosphoglycolate + H2O = glycolate + phosphate. In terms of biological role, catalyzes the dephosphorylation of 2-phosphoglycolate. This is Phosphoglycolate phosphatase from Methanosarcina mazei (strain ATCC BAA-159 / DSM 3647 / Goe1 / Go1 / JCM 11833 / OCM 88) (Methanosarcina frisia).